The chain runs to 378 residues: tRNA (guanine(26)-N(2))-dimethyltransferase (378 aa).

The region spanning 4–374 (KEVTEGKVRI…KGYEEIIRCV (371 aa)) is the Trm1 methyltransferase domain. Residues Arg44, Arg69, Asp87, Asp114, and Ala115 each coordinate S-adenosyl-L-methionine. Zn(2+) is bound by residues Cys246, Cys249, Cys263, and Cys266.

It belongs to the class I-like SAM-binding methyltransferase superfamily. Trm1 family.

The enzyme catalyses guanosine(26) in tRNA + 2 S-adenosyl-L-methionine = N(2)-dimethylguanosine(26) in tRNA + 2 S-adenosyl-L-homocysteine + 2 H(+). Dimethylates a single guanine residue at position 26 of a number of tRNAs using S-adenosyl-L-methionine as donor of the methyl groups. In Saccharolobus islandicus (strain M.16.27) (Sulfolobus islandicus), this protein is tRNA (guanine(26)-N(2))-dimethyltransferase.